The sequence spans 249 residues: Indole-3-glycerol phosphate synthase (249 aa).

Belongs to the TrpC family.

It carries out the reaction 1-(2-carboxyphenylamino)-1-deoxy-D-ribulose 5-phosphate + H(+) = (1S,2R)-1-C-(indol-3-yl)glycerol 3-phosphate + CO2 + H2O. Its pathway is amino-acid biosynthesis; L-tryptophan biosynthesis; L-tryptophan from chorismate: step 4/5. The polypeptide is Indole-3-glycerol phosphate synthase (Pyrobaculum arsenaticum (strain DSM 13514 / JCM 11321 / PZ6)).